Consider the following 166-residue polypeptide: Mitochondrial inner membrane protease subunit 1 (166 aa).

Catalysis depends on residues Ser40 and Lys83.

The protein belongs to the peptidase S26 family. IMP1 subfamily. Heterodimer of 2 subunits, IMMPL1 and IMMPL2.

It is found in the mitochondrion inner membrane. Functionally, catalyzes the removal of transit peptides required for the targeting of proteins from the mitochondrial matrix, across the inner membrane, into the inter-membrane space. Known to process the nuclear encoded protein DIABLO. This chain is Mitochondrial inner membrane protease subunit 1 (IMMP1L), found in Homo sapiens (Human).